The following is a 338-amino-acid chain: Methionine import ATP-binding protein MetN 2 (338 aa).

One can recognise an ABC transporter domain in the interval 2–242; it reads IEIEKVCVDF…PQHAFTQQLV (241 aa). Position 39-46 (39-46) interacts with ATP; that stretch reads GTSGAGKS.

Belongs to the ABC transporter superfamily. Methionine importer (TC 3.A.1.24) family. The complex is composed of two ATP-binding proteins (MetN), two transmembrane proteins (MetI) and a solute-binding protein (MetQ).

It is found in the cell inner membrane. It catalyses the reaction L-methionine(out) + ATP + H2O = L-methionine(in) + ADP + phosphate + H(+). The enzyme catalyses D-methionine(out) + ATP + H2O = D-methionine(in) + ADP + phosphate + H(+). In terms of biological role, part of the ABC transporter complex MetNIQ involved in methionine import. Responsible for energy coupling to the transport system. This Salmonella paratyphi A (strain ATCC 9150 / SARB42) protein is Methionine import ATP-binding protein MetN 2.